The following is a 651-amino-acid chain: Beta-mannosyltransferase 7 (651 aa).

The Cytoplasmic segment spans residues 1 to 19; the sequence is MKLEMSSYLHKVPNTGITN. A helical membrane pass occupies residues 20–42; that stretch reads LSNSKSIVFIMFCATLLFIITSS. Over 43–651 the chain is Extracellular; that stretch reads RYLTGSESLG…VKIDEKSEET (609 aa). 2 N-linked (GlcNAc...) asparagine glycosylation sites follow: N271 and N423.

Belongs to the BMT family.

It is found in the membrane. Its function is as follows. Beta-mannosyltransferase involved in cell wall biosynthesis through beta-1,2-mannosylation of cell wall phosphopeptidomannan. In Candida albicans (strain SC5314 / ATCC MYA-2876) (Yeast), this protein is Beta-mannosyltransferase 7 (BMT7).